The primary structure comprises 97 residues: Citrate lyase acyl carrier protein 2 (97 aa).

At serine 14 the chain carries O-(phosphoribosyl dephospho-coenzyme A)serine.

This sequence belongs to the CitD family. In terms of assembly, oligomer with a subunit composition of (alpha,beta,gamma)6.

It localises to the cytoplasm. Its function is as follows. Covalent carrier of the coenzyme of citrate lyase. The protein is Citrate lyase acyl carrier protein 2 of Salmonella paratyphi A (strain ATCC 9150 / SARB42).